Reading from the N-terminus, the 356-residue chain is Alanine racemase (356 aa).

Lys-35 functions as the Proton acceptor; specific for D-alanine in the catalytic mechanism. Lys-35 carries the post-translational modification N6-(pyridoxal phosphate)lysine. Arg-130 is a substrate binding site. Tyr-253 functions as the Proton acceptor; specific for L-alanine in the catalytic mechanism. Position 301 (Met-301) interacts with substrate.

This sequence belongs to the alanine racemase family. Pyridoxal 5'-phosphate is required as a cofactor.

The catalysed reaction is L-alanine = D-alanine. The protein operates within amino-acid biosynthesis; D-alanine biosynthesis; D-alanine from L-alanine: step 1/1. Its function is as follows. Catalyzes the interconversion of L-alanine and D-alanine. May also act on other amino acids. This Burkholderia mallei (strain NCTC 10229) protein is Alanine racemase (alr).